A 135-amino-acid chain; its full sequence is Mini-ribonuclease 3 (135 aa).

Aspartate 19 is a catalytic residue.

The protein belongs to the MrnC RNase family. In terms of assembly, homodimer. It depends on Mg(2+) as a cofactor.

It is found in the cytoplasm. Functionally, involved in correct processing of both the 5' and 3' ends of 23S rRNA precursor. Processes 30S rRNA precursor transcript even in absence of ribonuclease 3 (Rnc); Rnc processes 30S rRNA into smaller rRNA precursors. This is Mini-ribonuclease 3 from Gloeobacter violaceus (strain ATCC 29082 / PCC 7421).